We begin with the raw amino-acid sequence, 334 residues long: Galactosylgalactosylxylosylprotein 3-beta-glucuronosyltransferase 1 (334 aa).

The Cytoplasmic segment spans residues 1–6 (MPKRRD). Positions 3–5 (KRR) are essential for transport from endoplasmic reticulum to Golgi apparatus and interaction with SAR1A. The chain crosses the membrane as a helical; Signal-anchor for type II membrane protein span at residues 7–27 (ILAIVLIVLPWTLLITVWHQS). Over 28–334 (TLAPLLAVHK…KGFTDPSVEI (307 aa)) the chain is Lumenal. Positions 37–56 (KDEGSDPRRETPPGADPREY) are disordered. 91 to 93 (PTY) contacts UDP-alpha-D-glucuronate. A phosphothreonine mark is found at Thr-103 and Thr-108. A UDP-alpha-D-glucuronate-binding site is contributed by Asp-122. The N-linked (GlcNAc...) asparagine glycan is linked to Asn-140. 2 residues coordinate UDP-alpha-D-glucuronate: Arg-165 and Arg-170. N-linked (GlcNAc...) asparagine glycosylation occurs at Asn-184. Position 195 to 197 (195 to 197 (DDD)) interacts with UDP-alpha-D-glucuronate. Asp-197 is a binding site for Mn(2+). An interaction with galactose moiety of substrate glycoprotein region spans residues 245 to 254 (FDPHRPFAID). Glu-284 (proton donor/acceptor) is an active-site residue. Asn-303 carries N-linked (GlcNAc...) asparagine glycosylation. 311-313 (HTR) provides a ligand contact to UDP-alpha-D-glucuronate.

This sequence belongs to the glycosyltransferase 43 family. As to quaternary structure, homodimer. Interacts with SAR1A. Mn(2+) is required as a cofactor. In terms of processing, the soluble form derives from the membrane form by proteolytic processing. As to expression, mainly expressed in the brain.

It is found in the golgi apparatus membrane. The protein resides in the secreted. Its subcellular location is the endoplasmic reticulum membrane. It catalyses the reaction 3-O-(beta-D-galactosyl-(1-&gt;3)-beta-D-galactosyl-(1-&gt;4)-beta-D-xylosyl)-L-seryl-[protein] + UDP-alpha-D-glucuronate = 3-O-(beta-D-GlcA-(1-&gt;3)-beta-D-Gal-(1-&gt;3)-beta-D-Gal-(1-&gt;4)-beta-D-Xyl)-L-seryl-[protein] + UDP + H(+). It functions in the pathway protein modification; protein glycosylation. In terms of biological role, involved in the biosynthesis of L2/HNK-1 carbohydrate epitope on glycoproteins. Can also play a role in glycosaminoglycan biosynthesis. Substrates include asialo-orosomucoid (ASOR), asialo-fetuin, and asialo-neural cell adhesion molecule. Requires sphingomyelin for activity: stearoyl-sphingomyelin was the most effective, followed by palmitoyl-sphingomyelin and lignoceroyl-sphingomyelin. Activity was demonstrated only for sphingomyelin with a saturated fatty acid and not for that with an unsaturated fatty acid, regardless of the length of the acyl group. In Homo sapiens (Human), this protein is Galactosylgalactosylxylosylprotein 3-beta-glucuronosyltransferase 1.